A 275-amino-acid polypeptide reads, in one-letter code: 6-deoxy-6-sulfo-D-fructose transketolase subunit SqwG (275 aa).

Belongs to the transketolase family. Forms a complex with SqwH. The cofactor is thiamine diphosphate.

The catalysed reaction is 6-deoxy-6-sulfo-D-fructose + D-glyceraldehyde 3-phosphate = 4-deoxy-4-sulfo-D-erythrose + D-xylulose 5-phosphate. It carries out the reaction 4-deoxy-4-sulfo-D-erythrulose + D-glyceraldehyde 3-phosphate = sulfoacetaldehyde + D-xylulose 5-phosphate. Part of the sulfo-TK pathway, a D-sulfoquinovose degradation pathway that produces 2-hydroxyethane-1-sulfonate (isethionate). Catalyzes two steps of the pathway: the formation of 4-deoxy-4-sulfoerythrose (SE) and xylulose 5-phosphate from 6-deoxy-6-sulfo-D-fructose (SF) and glyceraldehyde 3-phosphate, and the formation of sulfoacetaldehyde (SA) and xylulose 5-phosphate from 4-deoxy-4-sulfo-D-erythrulose (SEu) and glyceraldehyde 3-phosphate. The protein is 6-deoxy-6-sulfo-D-fructose transketolase subunit SqwG of Clostridium sp. (strain MSTE9).